The sequence spans 179 residues: Transcription initiation factor TFIID subunit 10 (179 aa).

The segment at 1 to 23 (MNDPEQYEPSSSTESVLMPPPAL) is disordered.

The protein belongs to the TAF10 family. Component of the TFIID basal transcription factor complex, composed of TATA-box-binding protein tbp-1, and a number of TBP-associated factors (TAFs).

The protein resides in the nucleus. Its function is as follows. The TFIID basal transcription factor complex plays a major role in the initiation of RNA polymerase II (Pol II)-dependent transcription. TFIID recognizes and binds promoters via its subunit tbp-1, a TATA-box-binding protein, and promotes assembly of the pre-initiation complex (PIC). The TFIID complex consists of tbp-1 and TBP-associated factors (TAFs), including taf-10. Essential for early embryonic development, but not required for transcription of some genes; probably acts via activating transcription initiation by RNA Pol II, as part of the TFIID complex. The chain is Transcription initiation factor TFIID subunit 10 from Caenorhabditis elegans.